Here is an 825-residue protein sequence, read N- to C-terminus: Interleukin-4 receptor subunit alpha (825 aa).

An N-terminal signal peptide occupies residues M1–N25. Over M26–H232 the chain is Extracellular. The cysteines at positions 34 and 44 are disulfide-linked. N-linked (GlcNAc...) asparagine glycosylation occurs at N53. A disulfide bridge links C74 with C86. 5 N-linked (GlcNAc...) asparagine glycosylation sites follow: N98, N128, N134, N176, and N209. A Fibronectin type-III domain is found at A125–S224. Residues W212–S216 carry the WSXWS motif motif. A helical membrane pass occupies residues L233 to T256. The Cytoplasmic segment spans residues K257 to S825. The Box 1 motif signature appears at W262–A270. 2 disordered regions span residues E373–E397 and L433–T485. The interval G437–N557 is required for IRS1 activation and IL4-induced cell growth. The segment covering P475–T485 has biased composition (polar residues). 4 positions are modified to phosphotyrosine: Y497, Y575, Y603, and Y631. A required for IL4-induced gene expression region spans residues V558–L657. The disordered stretch occupies residues P651–L703. Low complexity predominate over residues P665–H677. Positions L678–P690 are enriched in basic and acidic residues. The ITIM motif signature appears at I711 to L716. The interval P782–P809 is disordered.

Belongs to the type I cytokine receptor family. Type 4 subfamily. The functional IL4 receptor is formed by initial binding of IL4 to IL4R. Subsequent recruitment to the complex of the common gamma chain, in immune cells, creates a type I receptor and, in non-immune cells, of IL13RA1 forms a type II receptor. IL4R can also interact with the IL13/IL13RA1 complex to form a similar type II receptor. Interacts with PIK3C3. Interacts with the SH2-containing phosphatases, PTPN6/SHIP1, PTPN11/SHIP2 and INPP5D/SHIP. Interacts with JAK1 through a Box 1-containing region; inhibited by SOCS5. Interacts with SOCS5; inhibits IL4 signaling. Interacts with JAK3. Interacts with CLM1. Interacts with IL13RA2. Post-translationally, on IL4 binding, phosphorylated on C-terminal tyrosine residues. Phosphorylation on any one of tyrosine residues, Tyr-575, Tyr-603 or Tyr-631, is required for STAT6-induced gene induction. The soluble form (sIL4R/IL4BP) can also be produced by proteolytic cleavage at the cell surface (shedding) by a metalloproteinase. Isoform 1 and isoform 2 are highly expressed in activated T-cells.

Its subcellular location is the cell membrane. The protein localises to the secreted. In terms of biological role, receptor for both interleukin 4 and interleukin 13. Couples to the JAK1/2/3-STAT6 pathway. The IL4 response is involved in promoting Th2 differentiation. The IL4/IL13 responses are involved in regulating IgE production and, chemokine and mucus production at sites of allergic inflammation. In certain cell types, can signal through activation of insulin receptor substrates, IRS1/IRS2. Its function is as follows. Soluble IL4R (sIL4R) inhibits IL4-mediated cell proliferation and IL5 up-regulation by T-cells. In Homo sapiens (Human), this protein is Interleukin-4 receptor subunit alpha (IL4R).